Here is a 434-residue protein sequence, read N- to C-terminus: NADH-quinone oxidoreductase subunit F 1 (434 aa).

NAD(+) is bound at residue 54-63; that stretch reads GRGGAGFPTG. 166 to 213 lines the FMN pocket; that stretch reads GAGAYICGEETALLESLEGKKGQPRLKPPFPANMGLYGCPTTVNNVES. [4Fe-4S] cluster contacts are provided by cysteine 345, cysteine 348, cysteine 351, and cysteine 391.

The protein belongs to the complex I 51 kDa subunit family. The cofactor is FMN. [4Fe-4S] cluster is required as a cofactor.

It carries out the reaction a quinone + NADH + 5 H(+)(in) = a quinol + NAD(+) + 4 H(+)(out). In terms of biological role, NDH-1 shuttles electrons from NADH, via FMN and iron-sulfur (Fe-S) centers, to quinones in the respiratory chain. The immediate electron acceptor for the enzyme in this species is believed to be ubiquinone. Couples the redox reaction to proton translocation (for every two electrons transferred, four hydrogen ions are translocated across the cytoplasmic membrane), and thus conserves the redox energy in a proton gradient. The polypeptide is NADH-quinone oxidoreductase subunit F 1 (nuoF1) (Rhizobium meliloti (strain 1021) (Ensifer meliloti)).